We begin with the raw amino-acid sequence, 288 residues long: ATP synthase gamma chain (288 aa).

The protein belongs to the ATPase gamma chain family. F-type ATPases have 2 components, CF(1) - the catalytic core - and CF(0) - the membrane proton channel. CF(1) has five subunits: alpha(3), beta(3), gamma(1), delta(1), epsilon(1). CF(0) has three main subunits: a, b and c.

Its subcellular location is the cell inner membrane. Functionally, produces ATP from ADP in the presence of a proton gradient across the membrane. The gamma chain is believed to be important in regulating ATPase activity and the flow of protons through the CF(0) complex. The chain is ATP synthase gamma chain from Blochmanniella pennsylvanica (strain BPEN).